We begin with the raw amino-acid sequence, 718 residues long: Peroxisomal bifunctional enzyme (718 aa).

Residues 1–280 (MAEYLRLPHS…FAEKSANKWS (280 aa)) are enoyl-CoA hydratase / isomerase. Lys-38 carries the N6-succinyllysine modification. Gly-99 lines the substrate pocket. N6-acetyllysine; alternate is present on residues Lys-163 and Lys-172. 2 positions are modified to N6-succinyllysine; alternate: Lys-163 and Lys-172. N6-succinyllysine is present on Lys-181. An N6-acetyllysine; alternate mark is found at Lys-189 and Lys-217. N6-succinyllysine; alternate occurs at positions 189 and 217. An N6-succinyllysine modification is found at Lys-240. Position 248 is an N6-acetyllysine (Lys-248). An N6-succinyllysine modification is found at Lys-252. The residue at position 274 (Lys-274) is an N6-acetyllysine; alternate. Residue Lys-274 is modified to N6-succinyllysine; alternate. N6-succinyllysine occurs at positions 278, 288, and 329. The segment at 281-567 (TPSGASWKTA…DMLCEAGRFG (287 aa)) is 3-hydroxyacyl-CoA dehydrogenase. N6-acetyllysine occurs at positions 344, 348, 355, and 459. The residue at position 527 (Lys-527) is an N6-succinyllysine. Position 543 is a phosphothreonine (Thr-543). N6-succinyllysine is present on Lys-572. An N6-acetyllysine; alternate mark is found at Lys-579, Lys-586, and Lys-705. N6-succinyllysine; alternate occurs at positions 579, 586, and 705. The Microbody targeting signal signature appears at 716-718 (SKL). An N6-succinyllysine modification is found at Lys-717.

This sequence in the N-terminal section; belongs to the enoyl-CoA hydratase/isomerase family. It in the C-terminal section; belongs to the 3-hydroxyacyl-CoA dehydrogenase family. Monomer. In terms of processing, acetylated, leading to enhanced enzyme activity. Acetylation is enhanced by up to 80% after treatment either with trichostin A (TCA) or with nicotinamide (NAM) with highest increase on Lys-344. Acetylation and enzyme activity increased by about 1.5% on addition of fatty acids.

The protein resides in the peroxisome. The enzyme catalyses a (3S)-3-hydroxyacyl-CoA = a (2E)-enoyl-CoA + H2O. The catalysed reaction is a 4-saturated-(3S)-3-hydroxyacyl-CoA = a (3E)-enoyl-CoA + H2O. It carries out the reaction a (3Z)-enoyl-CoA = a 4-saturated (2E)-enoyl-CoA. It catalyses the reaction a (3E)-enoyl-CoA = a 4-saturated (2E)-enoyl-CoA. The enzyme catalyses a (3S)-3-hydroxyacyl-CoA + NAD(+) = a 3-oxoacyl-CoA + NADH + H(+). The catalysed reaction is (2S,3S)-3-hydroxy-2-methylbutanoyl-CoA = (2E)-2-methylbut-2-enoyl-CoA + H2O. It carries out the reaction (2E)-dodecenedioyl-CoA + H2O = (3S)-hydroxydodecanedioyl-CoA. It catalyses the reaction (3S)-hydroxydodecanedioyl-CoA + NAD(+) = 3-oxododecanedioyl-CoA + NADH + H(+). The enzyme catalyses (2E)-octenedioyl-CoA + H2O = (3S)-hydroxyoctanedioyl-CoA. The catalysed reaction is (3S)-hydroxyoctanedioyl-CoA + NAD(+) = 3-oxooctanedioyl-CoA + NADH + H(+). It carries out the reaction (2E)-decenedioyl-CoA + H2O = (3S)-hydroxydecanedioyl-CoA. It catalyses the reaction (3S)-hydroxydecanedioyl-CoA + NAD(+) = 3-oxodecanedioyl-CoA + NADH + H(+). The enzyme catalyses (2E)-tetradecenedioyl-CoA + H2O = (3S)-hydroxytetradecanedioyl-CoA. The catalysed reaction is (3S)-hydroxytetradecanedioyl-CoA + NAD(+) = 3-oxotetradecanedioyl-CoA + NADH + H(+). It carries out the reaction (3E,5Z)-tetradecadienoyl-CoA = (2E,5Z)-tetradecadienoyl-CoA. It catalyses the reaction (3E,5Z)-octadienoyl-CoA = (2E,5Z)-octadienoyl-CoA. The enzyme catalyses (3S)-hydroxydecanoyl-CoA + NAD(+) = 3-oxodecanoyl-CoA + NADH + H(+). The catalysed reaction is (3E)-decenoyl-CoA = (2E)-decenoyl-CoA. It carries out the reaction (3Z)-hexenoyl-CoA = (2E)-hexenoyl-CoA. It catalyses the reaction (3E)-hexenoyl-CoA = (2E)-hexenoyl-CoA. The enzyme catalyses (3S)-hydroxydecanoyl-CoA = (2E)-decenoyl-CoA + H2O. The catalysed reaction is (3S)-hydroxyhexanoyl-CoA = (2E)-hexenoyl-CoA + H2O. It carries out the reaction (3S)-hydroxyhexadecanoyl-CoA + NAD(+) = 3-oxohexadecanoyl-CoA + NADH + H(+). It catalyses the reaction (3S)-hydroxyhexadecanoyl-CoA = (2E)-hexadecenoyl-CoA + H2O. The enzyme catalyses (2E)-hexadecenedioyl-CoA + H2O = (3S)-hydroxyhexadecanedioyl-CoA. The catalysed reaction is (3S)-hydroxyhexadecanedioyl-CoA + NAD(+) = 3-oxohexadecanedioyl-CoA + NADH + H(+). Its pathway is lipid metabolism; fatty acid beta-oxidation. Its activity is regulated as follows. Enzyme activity enhanced by acetylation. Functionally, peroxisomal trifunctional enzyme possessing 2-enoyl-CoA hydratase, 3-hydroxyacyl-CoA dehydrogenase, and delta 3, delta 2-enoyl-CoA isomerase activities. Catalyzes two of the four reactions of the long chain fatty acids peroxisomal beta-oxidation pathway. Can also use branched-chain fatty acids such as 2-methyl-2E-butenoyl-CoA as a substrate, which is hydrated into (2S,3S)-3-hydroxy-2-methylbutanoyl-CoA. Optimal isomerase for 2,5 double bonds into 3,5 form isomerization in a range of enoyl-CoA species. Also able to isomerize both 3-cis and 3-trans double bonds into the 2-trans form in a range of enoyl-CoA species. With HSD17B4, catalyzes the hydration of trans-2-enoyl-CoA and the dehydrogenation of 3-hydroxyacyl-CoA, but with opposite chiral specificity. Regulates the amount of medium-chain dicarboxylic fatty acids which are essential regulators of all fatty acid oxidation pathways. Also involved in the degradation of long-chain dicarboxylic acids through peroxisomal beta-oxidation. This is Peroxisomal bifunctional enzyme from Mus musculus (Mouse).